The chain runs to 116 residues: MTPLLTLILVVLMGLPLAQALDCHVCAYNGDNCFNPMRCPAMVAYCMTTRTYYTPTRMKVSKSCVPRCFETVYDGYSKHASTTSCCQYDLCNGTGLATPATLALAPILLATLWGLL.

The N-terminal stretch at 1 to 20 is a signal peptide; sequence MTPLLTLILVVLMGLPLAQA. The 87-residue stretch at 21 to 107 folds into the UPAR/Ly6 domain; that stretch reads LDCHVCAYNG…TPATLALAPI (87 aa). 5 disulfides stabilise this stretch: C23-C46, C26-C33, C39-C64, C68-C85, and C86-C91. C91 carries the GPI-anchor amidated cysteine lipid modification. Residues 92–116 constitute a propeptide, removed in mature form; it reads NGTGLATPATLALAPILLATLWGLL.

In terms of assembly, interacts with nAChRs containing alpha-4:beta-2 (CHRNA4:CHRNB2) and alpha-7 (CHRNA7) subunits. Interacts with CHRNA4 probably in the endoplasmic reticulum prior to nAChR pentameric assembly. Interacts with KCNA2/Potassium voltage-gated channel subfamily A member 2.

The protein localises to the cell membrane. The protein resides in the cell projection. It localises to the dendrite. It is found in the endoplasmic reticulum. Acts in different tissues through interaction to nicotinic acetylcholine receptors (nAChRs). The proposed role as modulator of nAChR activity seems to be dependent on the nAChR subtype and stoichiometry, and to involve an effect on nAChR trafficking and its cell surface expression, and on single channel properties of the nAChR inserted in the plasma membrane. Modulates functional properties of nicotinic acetylcholine receptors (nAChRs) to prevent excessive excitation, and hence neurodegeneration. Enhances desensitization by increasing both the rate and extent of desensitization of alpha-4:beta-2-containing nAChRs and slowing recovery from desensitization. Promotes large amplitude ACh-evoked currents through alpha-4:beta-2 nAChRs. Is involved in regulation of the nAChR pentameric assembly in the endoplasmic reticulum. Shifts stoichiometry from high sensitivity alpha-4(2):beta-2(3) to low sensitivity alpha-4(3):beta-2(2) nAChR. In vitro modulates alpha-3:beta-4-containing nAChRs. Reduces cell surface expression of (alpha-3:beta-4)(2):beta-4 and (alpha-3:beta-4)(2):alpha-5 nAChRs suggesting an interaction with nAChR alpha-3(-):(+)beta-4 subunit interfaces and an allosteric mode. Corresponding single channel effects characterized by decreased unitary conductance, altered burst proportions and enhanced desensitization/inactivation seem to depend on nAChR alpha:alpha subunit interfaces and are greater in (alpha-3:beta-2)(2):alpha-3 when compared to (alpha-3:beta-2)(2):alpha-5 nAChRs. Prevents plasticity in the primary visual cortex late in life. In Homo sapiens (Human), this protein is Ly-6/neurotoxin-like protein 1.